The chain runs to 280 residues: uncharacterized protein (280 aa).

A run of 7 helical transmembrane segments spans residues 6–26, 38–58, 79–99, 105–125, 144–164, 171–191, and 231–251; these read YLVIILIIAGVISVLAFTPLV, VLAIVLFVYVFFGRQIIYLFP, IFLLDLCPFFAVIAPVFVFLK, GVLAVFGLFGALVTLFGELIF, NQIYFMMHFLSLLVSLAIILW, ISFFYIHVFALIYFSYVALMV, and LVFIVGFSLSYVAILLMTLFA.

The protein resides in the cell membrane. This is an uncharacterized protein from Mycoplasma genitalium (strain ATCC 33530 / DSM 19775 / NCTC 10195 / G37) (Mycoplasmoides genitalium).